A 214-amino-acid chain; its full sequence is Probable transaldolase (214 aa).

Lysine 83 functions as the Schiff-base intermediate with substrate in the catalytic mechanism.

Belongs to the transaldolase family. Type 3B subfamily.

It is found in the cytoplasm. It carries out the reaction D-sedoheptulose 7-phosphate + D-glyceraldehyde 3-phosphate = D-erythrose 4-phosphate + beta-D-fructose 6-phosphate. It participates in carbohydrate degradation; pentose phosphate pathway; D-glyceraldehyde 3-phosphate and beta-D-fructose 6-phosphate from D-ribose 5-phosphate and D-xylulose 5-phosphate (non-oxidative stage): step 2/3. Functionally, transaldolase is important for the balance of metabolites in the pentose-phosphate pathway. The chain is Probable transaldolase from Streptococcus equi subsp. equi (strain 4047).